Here is a 333-residue protein sequence, read N- to C-terminus: Cytochrome f (333 aa).

The N-terminal stretch at Met1 to Ala16 is a signal peptide. A helical transmembrane segment spans residues Ile17–Leu36. 4 residues coordinate heme: Tyr45, Cys66, Cys69, and His70. Residues Val299–Lys319 form a helical membrane-spanning segment.

Belongs to the cytochrome f family. In terms of assembly, the 4 large subunits of the cytochrome b6-f complex are cytochrome b6, subunit IV (17 kDa polypeptide, PetD), cytochrome f and the Rieske protein, while the 4 small subunits are PetG, PetL, PetM and PetN. The complex functions as a dimer. Requires heme as cofactor.

Its subcellular location is the cellular thylakoid membrane. Its function is as follows. Component of the cytochrome b6-f complex, which mediates electron transfer between photosystem II (PSII) and photosystem I (PSI), cyclic electron flow around PSI, and state transitions. The protein is Cytochrome f of Nostoc punctiforme (strain ATCC 29133 / PCC 73102).